A 101-amino-acid chain; its full sequence is MAKKSMMNRDIKRTKIVKKYKAKRLELKKIIKSINVSDEERFQATIKLQALPRNASPTRQRSRCSLTGRPHGFYRKFGLARNKLRECTMNGEVPGLSKASW.

This sequence belongs to the universal ribosomal protein uS14 family. In terms of assembly, part of the 30S ribosomal subunit. Contacts proteins S3 and S10.

In terms of biological role, binds 16S rRNA, required for the assembly of 30S particles and may also be responsible for determining the conformation of the 16S rRNA at the A site. The chain is Small ribosomal subunit protein uS14 from Vesicomyosocius okutanii subsp. Calyptogena okutanii (strain HA).